Reading from the N-terminus, the 645-residue chain is 1,4-alpha-glucan branching enzyme GlgB (645 aa).

The active-site Nucleophile is aspartate 309. Glutamate 352 (proton donor) is an active-site residue. The tract at residues valine 619 to arginine 645 is disordered. Polar residues predominate over residues arginine 636–arginine 645.

It belongs to the glycosyl hydrolase 13 family. GlgB subfamily. Monomer.

The enzyme catalyses Transfers a segment of a (1-&gt;4)-alpha-D-glucan chain to a primary hydroxy group in a similar glucan chain.. It functions in the pathway glycan biosynthesis; glycogen biosynthesis. Catalyzes the formation of the alpha-1,6-glucosidic linkages in glycogen by scission of a 1,4-alpha-linked oligosaccharide from growing alpha-1,4-glucan chains and the subsequent attachment of the oligosaccharide to the alpha-1,6 position. In Bacillus cereus (strain B4264), this protein is 1,4-alpha-glucan branching enzyme GlgB.